The chain runs to 100 residues: UPF0235 protein Cvib_0403 (100 aa).

Belongs to the UPF0235 family.

This chain is UPF0235 protein Cvib_0403, found in Chlorobium phaeovibrioides (strain DSM 265 / 1930) (Prosthecochloris vibrioformis (strain DSM 265)).